A 314-amino-acid polypeptide reads, in one-letter code: MPNLKAIRDRIQSVKNTKKITEAMRLVAAAKVRRAQEQVLSTRPFADALAQVLYNLQNRLSFAETELPLFEQREPKAVALLVVTGDRGLCGGYNVNAIKRAEQRAKELKNQGIAVKLVLVGSKAKQYFGRRDYDVAASYANLEQIPNASEAAQIADSLVALFVSETVDRVELIYTRFVSLISSQPVVQTLFPLSPQGLEAPDDEIFRLITRGGKFQVEREKVEAPVESFPQDMIFEQDPVQILEALLPLYNTNQLLRALQESAASELAARMTAMSNASDNAGQLIGTLTLSYNKARQAAITQELLEVVAGANSL.

It belongs to the ATPase gamma chain family. F-type ATPases have 2 components, CF(1) - the catalytic core - and CF(0) - the membrane proton channel. CF(1) has five subunits: alpha(3), beta(3), gamma(1), delta(1), epsilon(1). CF(0) has three main subunits: a, b and c.

It is found in the cellular thylakoid membrane. Produces ATP from ADP in the presence of a proton gradient across the membrane. The gamma chain is believed to be important in regulating ATPase activity and the flow of protons through the CF(0) complex. This is ATP synthase gamma chain from Synechocystis sp. (strain ATCC 27184 / PCC 6803 / Kazusa).